The chain runs to 543 residues: CTP synthase (543 aa).

Positions 1-265 (MTKFIFVTGG…DRLVTDRFRI (265 aa)) are amidoligase domain. Residue serine 13 participates in CTP binding. Serine 13 contributes to the UTP binding site. ATP contacts are provided by residues 14 to 19 (SLGKGI) and aspartate 71. Residues aspartate 71 and glutamate 139 each coordinate Mg(2+). CTP is bound by residues 146-148 (DIE), 186-191 (KTKPTQ), and lysine 222. Residues 186–191 (KTKPTQ) and lysine 222 each bind UTP. The Glutamine amidotransferase type-1 domain maps to 290–541 (EIAMVGKYVD…VEAASQHKQT (252 aa)). Glycine 351 contributes to the L-glutamine binding site. The active-site Nucleophile; for glutamine hydrolysis is the cysteine 378. L-glutamine is bound by residues 379-382 (LGMQ), glutamate 402, and arginine 469. Residues histidine 514 and glutamate 516 contribute to the active site.

This sequence belongs to the CTP synthase family. In terms of assembly, homotetramer.

The enzyme catalyses UTP + L-glutamine + ATP + H2O = CTP + L-glutamate + ADP + phosphate + 2 H(+). It carries out the reaction L-glutamine + H2O = L-glutamate + NH4(+). The catalysed reaction is UTP + NH4(+) + ATP = CTP + ADP + phosphate + 2 H(+). It participates in pyrimidine metabolism; CTP biosynthesis via de novo pathway; CTP from UDP: step 2/2. With respect to regulation, allosterically activated by GTP, when glutamine is the substrate; GTP has no effect on the reaction when ammonia is the substrate. The allosteric effector GTP functions by stabilizing the protein conformation that binds the tetrahedral intermediate(s) formed during glutamine hydrolysis. Inhibited by the product CTP, via allosteric rather than competitive inhibition. Catalyzes the ATP-dependent amination of UTP to CTP with either L-glutamine or ammonia as the source of nitrogen. Regulates intracellular CTP levels through interactions with the four ribonucleotide triphosphates. The chain is CTP synthase from Hydrogenovibrio crunogenus (strain DSM 25203 / XCL-2) (Thiomicrospira crunogena).